We begin with the raw amino-acid sequence, 498 residues long: Protein flp (498 aa).

The next 4 membrane-spanning stretches (helical) occupy residues 6–26 (LYFL…IYIT), 389–409 (FNIV…FSAY), 433–453 (LSLC…YLIL), and 471–491 (LALI…LLFL).

The protein resides in the cell membrane. In terms of biological role, its precise function is unknown. Has no penicillin-binding activity and is not involved in methicillin resistance. This Staphylococcus aureus (strain NCTC 8325 / PS 47) protein is Protein flp (flp).